A 313-amino-acid polypeptide reads, in one-letter code: MNDIENLDRPPAIFIMGPTASGKTALSIALRQRLPVELVSVDSALIYRGMDIGTAKPSAQELALAPHRLIDIRDPAESYSAADFRKDALKEMADITAAGRIPLLVGGTMLYFKALLDGLSPLPSADPQVRQRIEQQASELGWGALHQQLAVIDPVAAARIHPNDPQRLSRALEVFFISGKTLTELTKISGETLPYRVHQFAIAPASRELLHQRIELRFHQMLDAGFEAEARVLFDRGDLHTDLPAIRCVGYRQMWSYLSGEIDYNDMVYRGVCATRQLAKRQMTWLRGWSSVQWLDSDKPGEALDSVIQVVSA.

Glycine 17–threonine 24 is an ATP binding site. Threonine 19 to threonine 24 serves as a coordination point for substrate. Interaction with substrate tRNA regions lie at residues aspartate 42–leucine 45, glutamine 166–arginine 170, and arginine 247–arginine 252.

It belongs to the IPP transferase family. Monomer. It depends on Mg(2+) as a cofactor.

It catalyses the reaction adenosine(37) in tRNA + dimethylallyl diphosphate = N(6)-dimethylallyladenosine(37) in tRNA + diphosphate. In terms of biological role, catalyzes the transfer of a dimethylallyl group onto the adenine at position 37 in tRNAs that read codons beginning with uridine, leading to the formation of N6-(dimethylallyl)adenosine (i(6)A). The sequence is that of tRNA dimethylallyltransferase from Yersinia pseudotuberculosis serotype O:1b (strain IP 31758).